The primary structure comprises 237 residues: Aliphatic sulfonates import ATP-binding protein SsuB 1 (237 aa).

Positions Leu5–Ala221 constitute an ABC transporter domain. Gly38–Ser45 contributes to the ATP binding site.

This sequence belongs to the ABC transporter superfamily. Aliphatic sulfonates importer (TC 3.A.1.17.2) family. In terms of assembly, the complex is composed of two ATP-binding proteins (SsuB), two transmembrane proteins (SsuC) and a solute-binding protein (SsuA).

It localises to the cell inner membrane. The catalysed reaction is ATP + H2O + aliphatic sulfonate-[sulfonate-binding protein]Side 1 = ADP + phosphate + aliphatic sulfonateSide 2 + [sulfonate-binding protein]Side 1.. Functionally, part of the ABC transporter complex SsuABC involved in aliphatic sulfonates import. Responsible for energy coupling to the transport system. This is Aliphatic sulfonates import ATP-binding protein SsuB 1 from Pseudomonas savastanoi pv. phaseolicola (strain 1448A / Race 6) (Pseudomonas syringae pv. phaseolicola (strain 1448A / Race 6)).